The sequence spans 288 residues: N-acetylneuraminate lyase (288 aa).

Positions 44 and 45 each coordinate aceneuramate. Catalysis depends on Y133, which acts as the Proton donor. The Schiff-base intermediate with substrate role is filled by K161. Aceneuramate contacts are provided by T163, G185, D187, E188, and S204.

It belongs to the DapA family. NanA subfamily. As to quaternary structure, homotetramer.

The protein localises to the cytoplasm. It catalyses the reaction aceneuramate = aldehydo-N-acetyl-D-mannosamine + pyruvate. It functions in the pathway amino-sugar metabolism; N-acetylneuraminate degradation; D-fructose 6-phosphate from N-acetylneuraminate: step 1/5. Its function is as follows. Catalyzes the reversible aldol cleavage of N-acetylneuraminic acid (sialic acid; Neu5Ac) to form pyruvate and N-acetylmannosamine (ManNAc) via a Schiff base intermediate. This is N-acetylneuraminate lyase from Clostridium perfringens (strain SM101 / Type A).